Consider the following 88-residue polypeptide: Small ribosomal subunit protein uS12 (88 aa).

Positions 1–24 (RKGRRDKIGKVKTAALKGSPQRRG) are disordered. Aspartate 81 bears the 3-methylthioaspartic acid mark.

This sequence belongs to the universal ribosomal protein uS12 family. In terms of assembly, part of the 30S ribosomal subunit. Contacts proteins S8 and S17. May interact with IF1 in the 30S initiation complex.

Functionally, with S4 and S5 plays an important role in translational accuracy. Its function is as follows. Interacts with and stabilizes bases of the 16S rRNA that are involved in tRNA selection in the A site and with the mRNA backbone. Located at the interface of the 30S and 50S subunits, it traverses the body of the 30S subunit contacting proteins on the other side and probably holding the rRNA structure together. The combined cluster of proteins S8, S12 and S17 appears to hold together the shoulder and platform of the 30S subunit. The chain is Small ribosomal subunit protein uS12 (rpsL) from Mycobacterium szulgai.